Reading from the N-terminus, the 270-residue chain is uncharacterized protein (270 aa).

A disordered region spans residues 166 to 186; the sequence is RRKENNISNESVSEEPESPLF.

This is an uncharacterized protein from Ostreid herpesvirus 1 (isolate France) (OsHV-1).